A 474-amino-acid polypeptide reads, in one-letter code: MTKKLHIKTWGCQMNEYDSSKMADLLDATHGYQLTDVAEEADVLLLNTCSIREKAQEKVFHQLGRWRLLKEKNPDLIIGVGGCVASQEGEHIRQRAHYVDIIFGPQTLHRLPEMINSVRGDRSPVVDISFPEIEKFDRLPEPRAEGPTAFVSIMEGCNKYCTYCVVPYTRGEEVSRPSDDILFEIAQLAAQGVREVNLLGQNVNAWRGENYDGTTGTFADLLRLVAAIDGIDRIRFTTSHPIEFTDDIIEVYRDTPELVSFLHLPVQSGSDRVLNLMGRTHTALEYKAIIRKLRAARPDIQISSDFIVGFPGETNDDFEKTMKLIADVNFDMSYSFIFSARPGTPAADMVDDVPEEEKKQRLYILQERINQQAMAWSRRMLGTTQRILVEGTSRKNIMELSGRTENNRVVNFEGTPEMIGKFVDVEITDVYPNSLRGKVVRTEDEMGLRVAETPESVIARTRKENELGVGFYQP.

Residues 3 to 120 (KKLHIKTWGC…LPEMINSVRG (118 aa)) form the MTTase N-terminal domain. [4Fe-4S] cluster contacts are provided by Cys-12, Cys-49, Cys-83, Cys-157, Cys-161, and Cys-164. Residues 143–375 (RAEGPTAFVS…QERINQQAMA (233 aa)) enclose the Radical SAM core domain. Residues 378-441 (RRMLGTTQRI…PNSLRGKVVR (64 aa)) form the TRAM domain.

This sequence belongs to the methylthiotransferase family. MiaB subfamily. As to quaternary structure, monomer. [4Fe-4S] cluster serves as cofactor.

It localises to the cytoplasm. It carries out the reaction N(6)-dimethylallyladenosine(37) in tRNA + (sulfur carrier)-SH + AH2 + 2 S-adenosyl-L-methionine = 2-methylsulfanyl-N(6)-dimethylallyladenosine(37) in tRNA + (sulfur carrier)-H + 5'-deoxyadenosine + L-methionine + A + S-adenosyl-L-homocysteine + 2 H(+). Its function is as follows. Catalyzes the methylthiolation of N6-(dimethylallyl)adenosine (i(6)A), leading to the formation of 2-methylthio-N6-(dimethylallyl)adenosine (ms(2)i(6)A) at position 37 in tRNAs that read codons beginning with uridine. The chain is tRNA-2-methylthio-N(6)-dimethylallyladenosine synthase from Salmonella enteritidis PT4 (strain P125109).